Reading from the N-terminus, the 229-residue chain is MSSKQQWVSSAIQSDSSGRSLSNVNRLAGDQQSINDRALSLLQRTRATKNLFPRREERRRYESSKSDLDIETDYEDQAGNLEIETENEEEAEMETEVPAPVRTHSYALDRYVRQKRREKQRKQSLKRVEKKYTPSELALYEIRKYQRSTDLLISKIPFARLVKEVTDEFTTKDQDLRWQSMAIMALQEASEAYLVGLLEHTNLLALHAKRITIMKKDMQLARRIRGQFI.

Polar residues predominate over residues 1–35; it reads MSSKQQWVSSAIQSDSSGRSLSNVNRLAGDQQSIN. The disordered stretch occupies residues 1–78; the sequence is MSSKQQWVSS…DIETDYEDQA (78 aa). The span at 53–68 shows a compositional bias: basic and acidic residues; that stretch reads PRREERRRYESSKSDL. Residues 115–132 carry the Nuclear localization signal motif; the sequence is KRREKQRKQSLKRVEKKY. An H3-like region spans residues 132–229; that stretch reads YTPSELALYE…LARRIRGQFI (98 aa).

The protein belongs to the histone H3 family. In terms of assembly, component of centromeric nucleosomes, where DNA is wrapped around a histone octamer core. The octamer contains two molecules each of H2A, H2B, CSE4/CENPA and H4 assembled in one CSE4-H4 heterotetramer and two H2A-H2B heterodimers. Interacts with the inner kinetochore. Interacts with the central kinetochore protein CTF19. Interacts with YTA7. Ubiquitinated. Is degraded through ubiquitin-mediated proteolysis when not protected by its association to the kinetochore.

The protein resides in the nucleus. Its subcellular location is the chromosome. The protein localises to the centromere. Its function is as follows. Histone H3-like nucleosomal protein that is specifically found in centromeric nucleosomes. Replaces conventional H3 in the nucleosome core of centromeric chromatin that serves as an assembly site for the inner kinetochore. Required for recruitment and assembly of kinetochore proteins, mitotic progression and chromosome segregation. May serve as an epigenetic mark that propagates centromere identity through replication and cell division. Required for functional chromatin architecture at the yeast 2-micron circle partitioning locus and promotes equal plasmid segregation. In Saccharomyces cerevisiae (strain ATCC 204508 / S288c) (Baker's yeast), this protein is Histone H3-like centromeric protein CSE4 (CSE4).